The sequence spans 229 residues: Non-structural protein P8 (229 aa).

Helical transmembrane passes span 119-139 (IIHM…VCTL) and 162-182 (SLNP…MVCA).

This sequence belongs to the orbivirus NS3 family. In terms of assembly, forms homooligomers via coiled-coil motif. Interacts with host OPTN; this interaction inhibits innate immune response.

The protein resides in the host cell membrane. The protein localises to the host Golgi apparatus. Plays a role in the inhibition of host innate immune response. Interacts with host OPTN and thus inhibits the recruitment of TBK1 to the host Golgi apparatus. In turn, downstream partner IRF3 cannot be activated and IFN-beta production is impaired. Its function is as follows. Facilitates viral particle release either by increasing plasma membrane permeability through a viroporin-like activity or by viral budding. This Antilocapra americana (Pronghorn) protein is Non-structural protein P8 (Segment-10).